Reading from the N-terminus, the 225-residue chain is Ribosomal RNA small subunit methyltransferase G (225 aa).

S-adenosyl-L-methionine-binding positions include Gly96, Phe101, 146–147, and Arg160; that span reads AE.

Belongs to the methyltransferase superfamily. RNA methyltransferase RsmG family.

The protein resides in the cytoplasm. In terms of biological role, specifically methylates the N7 position of a guanine in 16S rRNA. This is Ribosomal RNA small subunit methyltransferase G from Mycoplasma mobile (strain ATCC 43663 / 163K / NCTC 11711) (Mesomycoplasma mobile).